Here is a 228-residue protein sequence, read N- to C-terminus: FPLLMQAWKLGPALACGNTVVMKTAEQTPLTALYVAALAKEAGFPPGVINIISGYGPTAGAAISEHMDVDKVAFTGSTETAHIVMEAAAKSNLKRVSLELGGKSPMIVLADSDLDFAVDTCHHGLFFNMGQCCCAGSRIYVQEGVYDEFVKKSVERAKKRTVGDPFTEGIEQGPQIDTEQFNKINRMIEEGKQSGAKLLCGGKRWGDKGYYIEPTVFSDVPDDSTIGS.

Residue 76–81 participates in NAD(+) binding; sequence GSTETA. Catalysis depends on residues E99 and C132.

This sequence belongs to the aldehyde dehydrogenase family.

The enzyme catalyses an aldehyde + NAD(+) + H2O = a carboxylate + NADH + 2 H(+). Its pathway is alcohol metabolism; ethanol degradation; acetate from ethanol: step 2/2. This is Aldehyde dehydrogenase 9 (ALDH9) from Polyandrocarpa misakiensis (Tunicate).